We begin with the raw amino-acid sequence, 390 residues long: GTPase Obg (390 aa).

The 159-residue stretch at 1 to 159 (MKFVDEASVK…RELRLELLLL (159 aa)) folds into the Obg domain. One can recognise an OBG-type G domain in the interval 160 to 333 (ADVGMLGLPN…LCFKLGEFME (174 aa)). GTP contacts are provided by residues 166-173 (GLPNAGKS), 191-195 (FTTLI), 213-216 (DIPG), 283-286 (NKVD), and 314-316 (SAV). Residues Ser-173 and Thr-193 each contribute to the Mg(2+) site.

The protein belongs to the TRAFAC class OBG-HflX-like GTPase superfamily. OBG GTPase family. In terms of assembly, monomer. It depends on Mg(2+) as a cofactor.

It is found in the cytoplasm. In terms of biological role, an essential GTPase which binds GTP, GDP and possibly (p)ppGpp with moderate affinity, with high nucleotide exchange rates and a fairly low GTP hydrolysis rate. Plays a role in control of the cell cycle, stress response, ribosome biogenesis and in those bacteria that undergo differentiation, in morphogenesis control. In Vibrio atlanticus (strain LGP32) (Vibrio splendidus (strain Mel32)), this protein is GTPase Obg.